The following is a 149-amino-acid chain: Nucleoside diphosphate kinase (149 aa).

6 residues coordinate ATP: K9, F57, R85, T91, R102, and N112. H115 acts as the Pros-phosphohistidine intermediate in catalysis.

The protein belongs to the NDK family. Requires Mg(2+) as cofactor.

The protein resides in the cytoplasm. The catalysed reaction is a 2'-deoxyribonucleoside 5'-diphosphate + ATP = a 2'-deoxyribonucleoside 5'-triphosphate + ADP. It carries out the reaction a ribonucleoside 5'-diphosphate + ATP = a ribonucleoside 5'-triphosphate + ADP. In terms of biological role, major role in the synthesis of nucleoside triphosphates other than ATP. The ATP gamma phosphate is transferred to the NDP beta phosphate via a ping-pong mechanism, using a phosphorylated active-site intermediate. The polypeptide is Nucleoside diphosphate kinase (Methanoculleus marisnigri (strain ATCC 35101 / DSM 1498 / JR1)).